Reading from the N-terminus, the 801-residue chain is Growth-differentiation transition protein 7 (801 aa).

The N-terminal stretch at 1 to 22 (MIKTILIKLILLVIFCYHFLFA) is a signal peptide.

Belongs to the GDT family.

The protein localises to the secreted. In Dictyostelium discoideum (Social amoeba), this protein is Growth-differentiation transition protein 7 (gdt7).